We begin with the raw amino-acid sequence, 622 residues long: 1-deoxy-D-xylulose-5-phosphate synthase (622 aa).

Thiamine diphosphate is bound by residues H80 and 121–123 (GHS). D152 is a Mg(2+) binding site. Thiamine diphosphate contacts are provided by residues 153 to 154 (GA), N181, Y288, and E369. A Mg(2+)-binding site is contributed by N181.

Belongs to the transketolase family. DXPS subfamily. In terms of assembly, homodimer. Mg(2+) serves as cofactor. It depends on thiamine diphosphate as a cofactor.

It catalyses the reaction D-glyceraldehyde 3-phosphate + pyruvate + H(+) = 1-deoxy-D-xylulose 5-phosphate + CO2. It participates in metabolic intermediate biosynthesis; 1-deoxy-D-xylulose 5-phosphate biosynthesis; 1-deoxy-D-xylulose 5-phosphate from D-glyceraldehyde 3-phosphate and pyruvate: step 1/1. In terms of biological role, catalyzes the acyloin condensation reaction between C atoms 2 and 3 of pyruvate and glyceraldehyde 3-phosphate to yield 1-deoxy-D-xylulose-5-phosphate (DXP). The polypeptide is 1-deoxy-D-xylulose-5-phosphate synthase (Psychromonas ingrahamii (strain DSM 17664 / CCUG 51855 / 37)).